Reading from the N-terminus, the 383-residue chain is Chitinase-3-like protein 1 (383 aa).

An N-terminal signal peptide occupies residues 1–21; it reads MGLRAAHTGFVVLVLLQSCAA. The GH18 domain occupies 22-383; sequence YKLICYYTSW…SAIKDVLARV (362 aa). Cys26 and Cys51 are oxidised to a cystine. N-linked (GlcNAc...) asparagine glycosylation occurs at Asn60. Residues 70-71, 97-100, Tyr141, 204-207, and Arg263 each bind chitin; these read EW, GGWN, and LTYD. Residues Cys300 and Cys364 are joined by a disulfide bond. The interval 324-338 is important for AKT1 activation and IL8 production; that stretch reads QWVAYDDQESVKNKA. Residue Trp352 participates in chitin binding. N-linked (GlcNAc...) asparagine glycosylation is present at Asn367.

It belongs to the glycosyl hydrolase 18 family. Monomer. Post-translationally, glycosylated. In terms of tissue distribution, mammary secretions collected during the non-lactating period.

It localises to the secreted. It is found in the extracellular space. The protein localises to the cytoplasm. Its subcellular location is the perinuclear region. The protein resides in the endoplasmic reticulum. In terms of biological role, carbohydrate-binding lectin with a preference for chitin. Has no chitinase activity. May play a role in tissue remodeling and in the capacity of cells to respond to and cope with changes in their environment. Plays a role in T-helper cell type 2 (Th2) inflammatory response and IL-13-induced inflammation, regulating allergen sensitization, inflammatory cell apoptosis, dendritic cell accumulation and M2 macrophage differentiation. Facilitates invasion of pathogenic enteric bacteria into colonic mucosa and lymphoid organs. Mediates activation of AKT1 signaling pathway and subsequent IL8 production in colonic epithelial cells. Regulates antibacterial responses in lung by contributing to macrophage bacterial killing, controlling bacterial dissemination and augmenting host tolerance. Also regulates hyperoxia-induced injury, inflammation and epithelial apoptosis in lung. The sequence is that of Chitinase-3-like protein 1 (CHI3L1) from Bos taurus (Bovine).